Consider the following 810-residue polypeptide: RING finger protein unkempt homolog (810 aa).

The tract at residues 1–24 (MSKGPGPGGSAASSAPPAATAQVL) is disordered. Residues 10-19 (SAASSAPPAA) show a composition bias toward low complexity. C3H1-type zinc fingers lie at residues 84 to 113 (YSPD…HRTT), 124 to 154 (YYKT…HGPH), 215 to 241 (NYKT…HNSK), 251 to 285 (KYRS…HTRT), and 293 to 321 (IYKS…HVEQ). The tract at residues 239–265 (NSKDRRRSPRKHKYRSSPCPNVKHGDE) is disordered. Ser-240 is modified (phosphoserine). The segment covering 241 to 253 (KDRRRSPRKHKYR) has biased composition (basic residues). The segment at 324–343 (LSDDLQPSSTVSSPTQPGPV) is disordered. The segment covering 329-343 (QPSSTVSSPTQPGPV) has biased composition (low complexity). A phosphoserine mark is found at Ser-374, Ser-378, and Ser-385. Residues 569 to 585 (SASFHSASPSPPVSLSS) show a composition bias toward low complexity. The tract at residues 569–602 (SASFHSASPSPPVSLSSHFLQQPQGHLSQSENTF) is disordered. Residues 586 to 602 (HFLQQPQGHLSQSENTF) are compositionally biased toward polar residues. At Ser-631 the chain carries Phosphoserine. Residues 643–723 (GAAELARLRQ…QEELERLHSG (81 aa)) are a coiled coil. An RING-type; degenerate zinc finger spans residues 766–801 (SVKCLKCQEQNRAVLPCQHAVLCELCAEGSECPVCQ).

Belongs to the unkempt family.

Its subcellular location is the cytoplasm. Functionally, sequence-specific RNA-binding protein which plays an important role in the establishment and maintenance of the early morphology of cortical neurons during embryonic development. Acts as a translation repressor and controls a translationally regulated cell morphology program to ensure proper structuring of the nervous system. Translational control depends on recognition of its binding element within target mRNAs which consists of a mandatory UAG trimer upstream of a U/A-rich motif. Associated with polysomes. This is RING finger protein unkempt homolog (UNK) from Canis lupus familiaris (Dog).